The sequence spans 230 residues: Large ribosomal subunit protein uL1 (230 aa).

It belongs to the universal ribosomal protein uL1 family. In terms of assembly, part of the 50S ribosomal subunit.

Functionally, binds directly to 23S rRNA. The L1 stalk is quite mobile in the ribosome, and is involved in E site tRNA release. In terms of biological role, protein L1 is also a translational repressor protein, it controls the translation of the L11 operon by binding to its mRNA. The polypeptide is Large ribosomal subunit protein uL1 (Caldicellulosiruptor bescii (strain ATCC BAA-1888 / DSM 6725 / KCTC 15123 / Z-1320) (Anaerocellum thermophilum)).